The following is a 354-amino-acid chain: Hyaluronan and proteoglycan link protein 1 (354 aa).

Residues 1-15 constitute a propeptide that is removed on maturation; sequence MKSLLLLVLISICWA. Residues Asn21 and Asn56 are each glycosylated (N-linked (GlcNAc...) asparagine). Residues 38-152 form the Ig-like V-type domain; that stretch reads PHLLVEAEQA…EGLEDDTVVV (115 aa). 5 disulfides stabilise this stretch: Cys61/Cys139, Cys181/Cys252, Cys205/Cys226, Cys279/Cys349, and Cys304/Cys325. Link domains lie at 159-254 and 259-351; these read VVFP…FCFT and GRFY…YCFR.

The protein belongs to the HAPLN family. In terms of tissue distribution, widely expressed. Weakly expressed in the brain.

The protein resides in the secreted. It localises to the extracellular space. It is found in the extracellular matrix. In terms of biological role, stabilizes the aggregates of proteoglycan monomers with hyaluronic acid in the extracellular cartilage matrix. The chain is Hyaluronan and proteoglycan link protein 1 (HAPLN1) from Homo sapiens (Human).